The following is a 212-amino-acid chain: NADH dehydrogenase [ubiquinone] iron-sulfur protein 8, mitochondrial (212 aa).

The N-terminal 34 residues, Met1–Ala34, are a transit peptide targeting the mitochondrion. 4Fe-4S ferredoxin-type domains lie at Arg104 to Glu133 and Thr143 to Asn172. [4Fe-4S] cluster contacts are provided by Cys113, Cys116, Cys119, Cys123, Cys152, Cys155, Cys158, and Cys162.

Belongs to the complex I 23 kDa subunit family. In terms of assembly, complex I is composed of 45 different subunits. This is a component of the iron-sulfur (IP) fragment of the enzyme. Interacts with RAB5IF. [4Fe-4S] cluster is required as a cofactor.

It localises to the mitochondrion inner membrane. The catalysed reaction is a ubiquinone + NADH + 5 H(+)(in) = a ubiquinol + NAD(+) + 4 H(+)(out). Core subunit of the mitochondrial membrane respiratory chain NADH dehydrogenase (Complex I) which catalyzes electron transfer from NADH through the respiratory chain, using ubiquinone as an electron acceptor. Essential for the catalytic activity and assembly of complex I. This is NADH dehydrogenase [ubiquinone] iron-sulfur protein 8, mitochondrial (Ndufs8) from Mus musculus (Mouse).